The following is a 148-amino-acid chain: Aspartate carbamoyltransferase regulatory chain (148 aa).

Residues Cys106, Cys111, Cys134, and Cys137 each contribute to the Zn(2+) site.

Belongs to the PyrI family. Contains catalytic and regulatory chains. It depends on Zn(2+) as a cofactor.

Its function is as follows. Involved in allosteric regulation of aspartate carbamoyltransferase. In Methanococcus maripaludis (strain DSM 14266 / JCM 13030 / NBRC 101832 / S2 / LL), this protein is Aspartate carbamoyltransferase regulatory chain.